Reading from the N-terminus, the 418-residue chain is D-amino acid dehydrogenase 1 (418 aa).

Ile-3 to Tyr-17 is an FAD binding site.

The protein belongs to the DadA oxidoreductase family. FAD is required as a cofactor.

It carries out the reaction a D-alpha-amino acid + A + H2O = a 2-oxocarboxylate + AH2 + NH4(+). It functions in the pathway amino-acid degradation; D-alanine degradation; NH(3) and pyruvate from D-alanine: step 1/1. Oxidative deamination of D-amino acids. In Mesorhizobium japonicum (strain LMG 29417 / CECT 9101 / MAFF 303099) (Mesorhizobium loti (strain MAFF 303099)), this protein is D-amino acid dehydrogenase 1 (dadA1).